The following is a 468-amino-acid chain: UDP-N-acetylmuramate--L-alanine ligase (468 aa).

121–127 (GSHGKTT) lines the ATP pocket.

This sequence belongs to the MurCDEF family.

The protein localises to the cytoplasm. It catalyses the reaction UDP-N-acetyl-alpha-D-muramate + L-alanine + ATP = UDP-N-acetyl-alpha-D-muramoyl-L-alanine + ADP + phosphate + H(+). The protein operates within cell wall biogenesis; peptidoglycan biosynthesis. Functionally, cell wall formation. The polypeptide is UDP-N-acetylmuramate--L-alanine ligase (Borreliella burgdorferi (strain ATCC 35210 / DSM 4680 / CIP 102532 / B31) (Borrelia burgdorferi)).